A 597-amino-acid polypeptide reads, in one-letter code: MPERELWPAGPGLEPATRVGSCDSMMSTTSTRSGSSDSSYDFLSAEEKECLLFLEETIGSLDTEADSGLSTEKSEQATTPQVPRALPKTQPAPQGHPEEITGRVPEPKRVTPFSSAHPPGPQSLGLRSGSYSLPRNIHIGRNQNLRKSTTLTNSHNPGGSEGLVSGPETEQVSQSREPRQTLATPPDAALELDGALIPPPEAFRDTQPQQRGQGSLPRGPGELSPRPQVHPSLSSQRNREPAPEAMSQKASEKGSTGEPVPPRPPPLVSSRDAGSGDAAVLSGGHPSARPAPLTAPKPRKLPPNIVLKSSRSSFHSDPQNRLSRHSEAAPGDPSPASSSLQEQRKARREALEKLGLPQDQEEPSPRLSRPSVRLKETGVQAVSPAPAQVPGRAPAAAPTQGPSPGKAPALAQPPSPGKVLVPAQESTPGTAPAAKSTPIPIPKGPRAHSPLTQRKPDSGLTLQESGVPGLRQMSFKSNTLERSGIGLSSYLSAEKASSPQTSTSLEKGSFLDRISPSVLRNSRPRPASLGTGKDFEGIQVGKLADLEQEGGPKRLSFQGQSRDKLPRPPCVSVRISPKGVSDEHRREALKKLGLLKE.

3 disordered regions span residues 1-40 (MPERELWPAGPGLEPATRVGSCDSMMSTTSTRSGSSDSSY), 63-477 (TEAD…SFKS), and 492-585 (SAEK…DEHR). A compositionally biased stretch (low complexity) spans 20–39 (GSCDSMMSTTSTRSGSSDSS). Positions 68–81 (GLSTEKSEQATTPQ) are enriched in polar residues. Over residues 96-109 (HPEEITGRVPEPKR) the composition is skewed to basic and acidic residues. Serine 130 and serine 132 each carry phosphoserine. Polar residues-rich tracts occupy residues 141–157 (RNQNLRKSTTLTNSHNP) and 307–321 (LKSSRSSFHSDPQNR). Residues 328–339 (AAPGDPSPASSS) are compositionally biased toward low complexity. The span at 342 to 352 (EQRKARREALE) shows a compositional bias: basic and acidic residues. The segment covering 492 to 506 (SAEKASSPQTSTSLE) has biased composition (polar residues). Residue serine 515 is modified to Phosphoserine.

This sequence belongs to the SARG family.

The protein localises to the cytoplasm. Putative androgen-specific receptor. This chain is Specifically androgen-regulated gene protein (SARG), found in Bos taurus (Bovine).